The primary structure comprises 406 residues: Sensor histidine kinase YxjM (406 aa).

The Cytoplasmic portion of the chain corresponds to 1–13 (MNGQTPARHYYKK). The chain crosses the membrane as a helical span at residues 14–34 (LVPSLILILNCIQFLSHPTKA). Residues 35-36 (DP) are Extracellular-facing. A helical membrane pass occupies residues 37 to 57 (ILLAFVFAVYLAFIWIIPYVA). Residue S58 is a topological domain, cytoplasmic. 2 helical membrane passes run 59–79 (TAVS…FWAV) and 80–100 (SGQE…YAAF). Residue R101 is a topological domain, cytoplasmic. Residues 102-122 (LPSRLSLIFTACLIGGNILLL) form a helical membrane-spanning segment. Residues 123–125 (SSQ) are Extracellular-facing. A helical membrane pass occupies residues 126-146 (GGSLNTIISNISIMLGLYVLF). The Cytoplasmic portion of the chain corresponds to 147–406 (SSMRFRREAR…TNKEQKDEQR (260 aa)). The Histidine kinase domain maps to 209–396 (DIHDSIGHEL…KIELSLPLMT (188 aa)). The residue at position 211 (H211) is a Phosphohistidine; by autocatalysis.

Its subcellular location is the cell membrane. It carries out the reaction ATP + protein L-histidine = ADP + protein N-phospho-L-histidine.. Functionally, probable member of the two-component regulatory system YxjM/YxjL. May activate YxjL by phosphorylation. The sequence is that of Sensor histidine kinase YxjM (yxjM) from Bacillus subtilis (strain 168).